Consider the following 530-residue polypeptide: UDP-N-acetylmuramoyl-L-alanyl-D-glutamate--2,6-diaminopimelate ligase (530 aa).

Ser21 provides a ligand contact to UDP-N-acetyl-alpha-D-muramoyl-L-alanyl-D-glutamate. 99 to 105 serves as a coordination point for ATP; the sequence is GTNGKSS. UDP-N-acetyl-alpha-D-muramoyl-L-alanyl-D-glutamate is bound by residues 145-146, Ser172, Gln178, and Arg180; that span reads TT. Lys212 is modified (N6-carboxylysine). The 49-residue stretch at 221-269 folds into the RPE1 insert domain; the sequence is FKPAYREEFKGDTEHSTTAYILVREDASTGSTSKLLLEAKFGKMSTEYL. Meso-2,6-diaminopimelate is bound by residues Arg422, 446–449, Gly496, and Glu500; that span reads DNPR. A Meso-diaminopimelate recognition motif motif is present at residues 446 to 449; the sequence is DNPR.

The protein belongs to the MurCDEF family. MurE subfamily. It depends on Mg(2+) as a cofactor. Carboxylation is probably crucial for Mg(2+) binding and, consequently, for the gamma-phosphate positioning of ATP.

The protein resides in the cytoplasm. It catalyses the reaction UDP-N-acetyl-alpha-D-muramoyl-L-alanyl-D-glutamate + meso-2,6-diaminopimelate + ATP = UDP-N-acetyl-alpha-D-muramoyl-L-alanyl-gamma-D-glutamyl-meso-2,6-diaminopimelate + ADP + phosphate + H(+). It participates in cell wall biogenesis; peptidoglycan biosynthesis. Catalyzes the addition of meso-diaminopimelic acid to the nucleotide precursor UDP-N-acetylmuramoyl-L-alanyl-D-glutamate (UMAG) in the biosynthesis of bacterial cell-wall peptidoglycan. The polypeptide is UDP-N-acetylmuramoyl-L-alanyl-D-glutamate--2,6-diaminopimelate ligase (Rickettsia felis (strain ATCC VR-1525 / URRWXCal2) (Rickettsia azadi)).